Consider the following 265-residue polypeptide: Translation initiation factor 2 subunit alpha (265 aa).

Residues 12-82 form the S1 motif domain; that stretch reads GELVIGTVKK…KMRVVEVSLK (71 aa).

It belongs to the eIF-2-alpha family. In terms of assembly, heterotrimer composed of an alpha, a beta and a gamma chain.

In terms of biological role, eIF-2 functions in the early steps of protein synthesis by forming a ternary complex with GTP and initiator tRNA. The protein is Translation initiation factor 2 subunit alpha of Pyrobaculum aerophilum (strain ATCC 51768 / DSM 7523 / JCM 9630 / CIP 104966 / NBRC 100827 / IM2).